Reading from the N-terminus, the 185-residue chain is MMLERIEAIERITGVLEDELVICNLGFPSRELYSIRDSPRHFYMLGSMGMASSIGLGLALSQERRVVVLDGDGSILMNLGGLVTAAAQSPGNLIIVLLDNRCYATTGSQCTYADVIDLGAVAESMGFNVIRFADDLNFEQALAMDGPVFAHVPVKPGNADVPVIDLDAEEIIERFIKEVRGATED.

This sequence belongs to the TPP enzyme family. Heterododecamer composed of 6 subunits alpha and 6 subunits beta. It depends on thiamine diphosphate as a cofactor.

The catalysed reaction is 3-sulfopyruvate + H(+) = sulfoacetaldehyde + CO2. Its pathway is cofactor biosynthesis; coenzyme M biosynthesis; sulfoacetaldehyde from phosphoenolpyruvate and sulfite: step 4/4. Its function is as follows. Involved in the biosynthesis of the coenzyme M (2-mercaptoethanesulfonic acid). Catalyzes the decarboxylation of sulfopyruvate to sulfoacetaldehyde. The polypeptide is Sulfopyruvate decarboxylase subunit beta (Methanothermobacter thermautotrophicus (strain ATCC 29096 / DSM 1053 / JCM 10044 / NBRC 100330 / Delta H) (Methanobacterium thermoautotrophicum)).